The primary structure comprises 182 residues: Plasmolipin (182 aa).

The Cytoplasmic portion of the chain corresponds to 1 to 35; sequence MAEFPSKVSTRTSSPAQGVGASVSALRPDLGFVRS. Ser-9 is subject to Phosphoserine. The 135-residue stretch at 32–166 folds into the MARVEL domain; that stretch reads FVRSALGVLA…SAFFSFQAWR (135 aa). A helical transmembrane segment spans residues 36–56; the sequence is ALGVLALLQLALGLLVWALIA. Over 57 to 68 the chain is Extracellular; the sequence is DTPYHLYPAYGW. A helical membrane pass occupies residues 69–89; sequence VMFVAVFLWLVTIVFFIIYLF. Residues 90-99 lie on the Cytoplasmic side of the membrane; sequence QLHMKLYMVP. Residues 100 to 120 traverse the membrane as a helical segment; it reads WPLVLLIFFVAATVLYITAFI. At 121–141 the chain is on the extracellular side; that stretch reads ACAAAVDLTSLRGSRPYNQRS. A helical transmembrane segment spans residues 142 to 162; sequence AASFFACLVMIAYGVSAFFSF. At 163–182 the chain is on the cytoplasmic side; sequence QAWRGVGSNAATSQMAGGYS.

This sequence belongs to the MAL family. As to quaternary structure, forms oligomers. In terms of processing, phosphorylated.

It localises to the membrane. The protein resides in the cell membrane. It is found in the myelin membrane. The protein localises to the apical cell membrane. Functionally, main component of the myelin sheath that plays an important role in myelin membrane biogenesis and myelination. Plays an essential function in apical endocytosis. Regulates epithelial development through the regulation of apical endocytosis. Part of the intracellular machinery that mediates basolateral-to-apical transport of ICAM-1, an essential adhesion receptor in epithelial cells, from the subapical compartment in hepatic epithelial cells. This is Plasmolipin (Pllp) from Mus musculus (Mouse).